A 525-amino-acid polypeptide reads, in one-letter code: Protein nucleotidyltransferase YdiU (525 aa).

G107, G109, R110, K129, D141, G142, R192, and R199 together coordinate ATP. Catalysis depends on D268, which acts as the Proton acceptor. Residues N269 and D278 each coordinate Mg(2+). Position 278 (D278) interacts with ATP.

This sequence belongs to the SELO family. It depends on Mg(2+) as a cofactor. The cofactor is Mn(2+).

It catalyses the reaction L-seryl-[protein] + ATP = 3-O-(5'-adenylyl)-L-seryl-[protein] + diphosphate. It carries out the reaction L-threonyl-[protein] + ATP = 3-O-(5'-adenylyl)-L-threonyl-[protein] + diphosphate. The catalysed reaction is L-tyrosyl-[protein] + ATP = O-(5'-adenylyl)-L-tyrosyl-[protein] + diphosphate. The enzyme catalyses L-histidyl-[protein] + UTP = N(tele)-(5'-uridylyl)-L-histidyl-[protein] + diphosphate. It catalyses the reaction L-seryl-[protein] + UTP = O-(5'-uridylyl)-L-seryl-[protein] + diphosphate. It carries out the reaction L-tyrosyl-[protein] + UTP = O-(5'-uridylyl)-L-tyrosyl-[protein] + diphosphate. Nucleotidyltransferase involved in the post-translational modification of proteins. It can catalyze the addition of adenosine monophosphate (AMP) or uridine monophosphate (UMP) to a protein, resulting in modifications known as AMPylation and UMPylation. This is Protein nucleotidyltransferase YdiU from Ralstonia nicotianae (strain ATCC BAA-1114 / GMI1000) (Ralstonia solanacearum).